We begin with the raw amino-acid sequence, 174 residues long: MTQPLFLIGPRGCGKTTVGMALADSLNRRFVDTDQWLQSQLNMTVADIVEREEWAGFRARETAALEAVTAPSTVIATGGGIILTEFNRHFMQNNGIVVYLCAPVSVLVNRLQAAPEEDLRPTLTGKPLSEEVQEVLEERDALYREVAHIIIDATNEPSQVISEIRSALAQTINC.

12-17 serves as a coordination point for ATP; the sequence is GCGKTT. Threonine 16 and aspartate 32 together coordinate Mg(2+). The substrate site is built by aspartate 34, arginine 58, and glycine 79. Positions 112–126 are LID domain; it reads QAAPEEDLRPTLTGK. Arginine 120 lines the ATP pocket. Arginine 139 contributes to the substrate binding site.

Belongs to the shikimate kinase family. AroL subfamily. As to quaternary structure, monomer. Mg(2+) is required as a cofactor.

The protein localises to the cytoplasm. The catalysed reaction is shikimate + ATP = 3-phosphoshikimate + ADP + H(+). Its pathway is metabolic intermediate biosynthesis; chorismate biosynthesis; chorismate from D-erythrose 4-phosphate and phosphoenolpyruvate: step 5/7. In terms of biological role, catalyzes the specific phosphorylation of the 3-hydroxyl group of shikimic acid using ATP as a cosubstrate. The chain is Shikimate kinase 2 from Escherichia coli O81 (strain ED1a).